Here is a 194-residue protein sequence, read N- to C-terminus: 13S globulin basic chain (194 aa).

Positions 13–162 (ENIKSPQEAD…SFQISSEEAE (150 aa)) constitute a Cupin type-1 domain.

Belongs to the 11S seed storage protein (globulins) family. In terms of assembly, hexamer; each subunit is composed of an acidic and a basic chain derived from a single precursor and linked by a disulfide bond. In terms of tissue distribution, cotyledons and endosperm protein bodies.

In terms of biological role, seed storage protein with a relatively high level of Lys and Met. The protein is 13S globulin basic chain of Fagopyrum esculentum (Common buckwheat).